Here is a 129-residue protein sequence, read N- to C-terminus: Glycine cleavage system H protein (129 aa).

Residues 24 to 106 (SYTVGISEHA…FGDGWFFRVM (83 aa)) enclose the Lipoyl-binding domain. Lys65 is subject to N6-lipoyllysine.

The protein belongs to the GcvH family. As to quaternary structure, the glycine cleavage system is composed of four proteins: P, T, L and H. (R)-lipoate serves as cofactor.

Functionally, the glycine cleavage system catalyzes the degradation of glycine. The H protein shuttles the methylamine group of glycine from the P protein to the T protein. This Shewanella woodyi (strain ATCC 51908 / MS32) protein is Glycine cleavage system H protein.